The sequence spans 430 residues: Transcription factor E2F1 (430 aa).

The segment at 62 to 103 is cyclin A:CDK2 binding; it reads ATPQAPRPAPSAPRPALGRPPVKRRLDLETDHQYLAGSSGPF. Residues 84–186 are interaction with BIRC2/c-IAP1; sequence KRRLDLETDH…KKSKNHIQWL (103 aa). Positions 95 to 123 are disordered; it reads YLAGSSGPFRGRGRHPGKGVKSPGEKSRY. Residues 105–189 mediate DNA binding; sequence GRGRHPGKGV…KNHIQWLGSH (85 aa). N6-acetyllysine is present on residues Lys-112, Lys-115, and Lys-120. Positions 148–169 are leucine-zipper; sequence LNWAAEVLKVQKRRIYDITNVL. A DEF box motif is present at residues 153 to 189; the sequence is EVLKVQKRRIYDITNVLEGIQLIAKKSKNHIQWLGSH. Lys-180 bears the N6-methyllysine; by SETD7 mark. The segment at 187–375 is required for interaction with TRIM28; that stretch reads GSHTMVGIGK…QLSPLVAADS (189 aa). Positions 190-279 are dimerization; it reads TMVGIGKRLE…AVDSSETFQI (90 aa). Residues 294-340 are disordered; it reads PEESADGISPGKTSCQETSSGEDRTADSGPAGPPPSPPSTSPALDPS. The segment covering 324 to 333 has biased composition (pro residues); the sequence is AGPPPSPPST. Positions 361 to 430 are transactivation; it reads PMEEDQLSPL…DFGDLTPLDF (70 aa). Phosphoserine is present on residues Ser-368 and Ser-396. Residues 402–419 form an RB1 binding region; it reads LDYHFGLEEGEGIRDLFD. Residue Thr-426 is modified to Phosphothreonine.

The protein belongs to the E2F/DP family. Component of the DRTF1/E2F transcription factor complex. Forms heterodimers with DP family members. The E2F1 complex binds specifically hypophosphorylated RB1, the interaction represses E2F1-driven transcription. During the cell cycle, RB1 becomes phosphorylated in mid-to-late G1 phase, detaches from the DRTF1/E2F complex, rendering E2F transcriptionally active. Interacts with TRRAP, which probably mediates its interaction with histone acetyltransferase complexes, leading to transcription activation. Binds TOPBP1 and EAPP. Interacts with ARID3A. Interacts with TRIM28; the interaction inhibits E2F1 acetylation through recruiting HDAC1 and represses its transcriptional activity. Interaction with KAT2B; the interaction acetylates E2F1 enhancing its DNA-binding and transcriptional activity. Interacts with BIRC2/c-IAP1 (via BIR domains). The complex TFDP1:E2F1 interacts with CEBPA; the interaction prevents CEBPA binding to target genes promoters and represses its transcriptional activity. Interacts with RRP1B. Interacts with HCFC1. Interacts with KMT2E; the interaction is probably indirect and is mediated via HCFC1. Interacts with DCAF5 and L3MBTL3; the interaction requires methylation at Lys-180 and is necessary to target E2F1 for ubiquitination by the CRL4-DCAF5 E3 ubiquitin ligase complex. Phosphorylated by CDK2 and cyclin A-CDK2 in the S-phase. Phosphorylation by CHEK2 stabilizes E2F1 upon DNA damage and regulates its effect on transcription and apoptosis. Phosphorylation at Ser-396 by GSK3B promotes interaction with USP11, leading to its deubiquitination and stabilization. Post-translationally, ubiquitinated via 'Lys-63'-linked ubiquitin, leading to its degradation. Deubiquitinated by USP11 following phosphorylation by GSK3B, promoting its stability. In terms of processing, acetylation stimulates DNA-binding. Enhanced under stress conditions such as DNA damage and inhibited by retinoblastoma protein RB1. Regulated by KAP1/TRIM28 which recruits HDAC1 to E2F1 resulting in deacetylation. Acetylated by P/CAF/KAT2B. Methylation at Lys-180 by SETD7 promotes E2F1 ubiquitin-dependent proteasomal degradation.

The protein resides in the nucleus. Its activity is regulated as follows. BIRC2/c-IAP1 stimulates its transcriptional activity. In terms of biological role, transcription activator that binds DNA cooperatively with DP proteins through the E2 recognition site, 5'-TTTC[CG]CGC-3' found in the promoter region of a number of genes whose products are involved in cell cycle regulation or in DNA replication. The DRTF1/E2F complex functions in the control of cell-cycle progression from G1 to S phase. E2F1 binds preferentially RB1 in a cell-cycle dependent manner. It can mediate both cell proliferation and TP53/p53-dependent apoptosis. Blocks adipocyte differentiation by binding to specific promoters repressing CEBPA binding to its target gene promoters. Directly activates transcription of PEG10. Positively regulates transcription of RRP1B. This Mus musculus (Mouse) protein is Transcription factor E2F1.